We begin with the raw amino-acid sequence, 165 residues long: Phosphopantetheine adenylyltransferase (165 aa).

Residue S10 participates in substrate binding. ATP-binding positions include 10–11 (SF) and H18. 3 residues coordinate substrate: K42, T79, and R93. Residues 94–96 (GLR), E104, and 129–135 (VRPITAT) contribute to the ATP site.

Belongs to the bacterial CoaD family. In terms of assembly, homohexamer. It depends on Mg(2+) as a cofactor.

The protein resides in the cytoplasm. It carries out the reaction (R)-4'-phosphopantetheine + ATP + H(+) = 3'-dephospho-CoA + diphosphate. It functions in the pathway cofactor biosynthesis; coenzyme A biosynthesis; CoA from (R)-pantothenate: step 4/5. Reversibly transfers an adenylyl group from ATP to 4'-phosphopantetheine, yielding dephospho-CoA (dPCoA) and pyrophosphate. The chain is Phosphopantetheine adenylyltransferase from Rhodopseudomonas palustris (strain BisB5).